Here is a 394-residue protein sequence, read N- to C-terminus: Ribulose bisphosphate carboxylase large chain (394 aa).

Position 5 is an N6,N6,N6-trimethyllysine (Lys-5). Residues Asn-114 and Thr-164 each contribute to the substrate site. Lys-166 acts as the Proton acceptor in catalysis. Substrate is bound at residue Lys-168. Residues Lys-192, Asp-194, and Glu-195 each contribute to the Mg(2+) site. At Lys-192 the chain carries N6-carboxylysine. His-285 serves as the catalytic Proton acceptor. Residues Arg-286, His-318, and Ser-370 each coordinate substrate.

Belongs to the RuBisCO large chain family. Type I subfamily. As to quaternary structure, heterohexadecamer of 8 large chains and 8 small chains. It depends on Mg(2+) as a cofactor.

Its subcellular location is the plastid. It localises to the chloroplast. The catalysed reaction is 2 (2R)-3-phosphoglycerate + 2 H(+) = D-ribulose 1,5-bisphosphate + CO2 + H2O. It catalyses the reaction D-ribulose 1,5-bisphosphate + O2 = 2-phosphoglycolate + (2R)-3-phosphoglycerate + 2 H(+). Functionally, ruBisCO catalyzes two reactions: the carboxylation of D-ribulose 1,5-bisphosphate, the primary event in carbon dioxide fixation, as well as the oxidative fragmentation of the pentose substrate in the photorespiration process. Both reactions occur simultaneously and in competition at the same active site. The polypeptide is Ribulose bisphosphate carboxylase large chain (rbcL) (Barclaya longifolia (Orchid lily)).